Reading from the N-terminus, the 292-residue chain is Elongation factor Ts (292 aa).

The segment at 79–82 (TDFV) is involved in Mg(2+) ion dislocation from EF-Tu.

The protein belongs to the EF-Ts family.

Its subcellular location is the cytoplasm. Associates with the EF-Tu.GDP complex and induces the exchange of GDP to GTP. It remains bound to the aminoacyl-tRNA.EF-Tu.GTP complex up to the GTP hydrolysis stage on the ribosome. The protein is Elongation factor Ts of Xanthomonas oryzae pv. oryzae (strain MAFF 311018).